The chain runs to 880 residues: Valine--tRNA ligase (880 aa).

The 'HIGH' region signature appears at 49 to 59; the sequence is PNVTGKLHLGH. Positions 525–529 match the 'KMSKS' region motif; that stretch reads KMSKS. ATP is bound at residue Lys528. A coiled-coil region spans residues 809–880; it reads LEGLINIEEE…VKARLAELKR (72 aa).

It belongs to the class-I aminoacyl-tRNA synthetase family. ValS type 1 subfamily. As to quaternary structure, monomer.

It is found in the cytoplasm. It catalyses the reaction tRNA(Val) + L-valine + ATP = L-valyl-tRNA(Val) + AMP + diphosphate. Catalyzes the attachment of valine to tRNA(Val). As ValRS can inadvertently accommodate and process structurally similar amino acids such as threonine, to avoid such errors, it has a 'posttransfer' editing activity that hydrolyzes mischarged Thr-tRNA(Val) in a tRNA-dependent manner. The chain is Valine--tRNA ligase from Geobacillus kaustophilus (strain HTA426).